The primary structure comprises 816 residues: Phenylalanine--tRNA ligase beta subunit (816 aa).

The 109-residue stretch at 40 to 148 folds into the tRNA-binding domain; sequence FEELAALKTG…EGMAHGQRFI (109 aa). Residues 401–479 enclose the B5 domain; that stretch reads KAVEVQRFSI…RIYGYDNVPT (79 aa). Mg(2+) is bound by residues D457, D463, E466, and E467. The FDX-ACB domain maps to 721-814; sequence PVYPAVKRDI…LTDRFGGSFR (94 aa).

This sequence belongs to the phenylalanyl-tRNA synthetase beta subunit family. Type 1 subfamily. As to quaternary structure, tetramer of two alpha and two beta subunits. Mg(2+) is required as a cofactor.

The protein localises to the cytoplasm. It catalyses the reaction tRNA(Phe) + L-phenylalanine + ATP = L-phenylalanyl-tRNA(Phe) + AMP + diphosphate + H(+). This Desulfotalea psychrophila (strain LSv54 / DSM 12343) protein is Phenylalanine--tRNA ligase beta subunit.